The primary structure comprises 190 residues: Cytidylate kinase (190 aa).

7 to 15 (GKIGSGKST) serves as a coordination point for ATP.

The protein belongs to the cytidylate kinase family. Type 2 subfamily.

The protein resides in the cytoplasm. It carries out the reaction CMP + ATP = CDP + ADP. The enzyme catalyses dCMP + ATP = dCDP + ADP. This Thermoplasma volcanium (strain ATCC 51530 / DSM 4299 / JCM 9571 / NBRC 15438 / GSS1) protein is Cytidylate kinase.